A 423-amino-acid chain; its full sequence is Serine--tRNA ligase (423 aa).

231–233 (TAE) provides a ligand contact to L-serine. 262-264 (RSE) serves as a coordination point for ATP. Position 285 (Glu285) interacts with L-serine. Residue 349 to 352 (EISS) coordinates ATP. Ser384 contacts L-serine.

Belongs to the class-II aminoacyl-tRNA synthetase family. Type-1 seryl-tRNA synthetase subfamily. Homodimer. The tRNA molecule binds across the dimer.

The protein resides in the cytoplasm. It carries out the reaction tRNA(Ser) + L-serine + ATP = L-seryl-tRNA(Ser) + AMP + diphosphate + H(+). The catalysed reaction is tRNA(Sec) + L-serine + ATP = L-seryl-tRNA(Sec) + AMP + diphosphate + H(+). The protein operates within aminoacyl-tRNA biosynthesis; selenocysteinyl-tRNA(Sec) biosynthesis; L-seryl-tRNA(Sec) from L-serine and tRNA(Sec): step 1/1. In terms of biological role, catalyzes the attachment of serine to tRNA(Ser). Is also able to aminoacylate tRNA(Sec) with serine, to form the misacylated tRNA L-seryl-tRNA(Sec), which will be further converted into selenocysteinyl-tRNA(Sec). This Lactococcus lactis subsp. lactis (strain IL1403) (Streptococcus lactis) protein is Serine--tRNA ligase.